Consider the following 275-residue polypeptide: Adenosylcobinamide-GDP ribazoletransferase (275 aa).

6 consecutive transmembrane segments (helical) span residues 53 to 73, 113 to 133, 144 to 164, 204 to 224, 225 to 245, and 253 to 273; these read WFVFLLFQFLFGPTIAFTISL, VGSFGAAGISLLLLLKVLGVS, LPFTFGSSAQIHLLSVWLYFV, FACIFGVTPFLALVYLHPYFL, LSLLCIIPSFVYMFSLMKRWI, and LGAVQQVVETCIWISGVFVWI.

Belongs to the CobS family. Mg(2+) serves as cofactor.

The protein resides in the cell inner membrane. The catalysed reaction is alpha-ribazole + adenosylcob(III)inamide-GDP = adenosylcob(III)alamin + GMP + H(+). It carries out the reaction alpha-ribazole 5'-phosphate + adenosylcob(III)inamide-GDP = adenosylcob(III)alamin 5'-phosphate + GMP + H(+). Its pathway is cofactor biosynthesis; adenosylcobalamin biosynthesis; adenosylcobalamin from cob(II)yrinate a,c-diamide: step 7/7. In terms of biological role, joins adenosylcobinamide-GDP and alpha-ribazole to generate adenosylcobalamin (Ado-cobalamin). Also synthesizes adenosylcobalamin 5'-phosphate from adenosylcobinamide-GDP and alpha-ribazole 5'-phosphate. The sequence is that of Adenosylcobinamide-GDP ribazoletransferase from Leptospira biflexa serovar Patoc (strain Patoc 1 / Ames).